The following is a 411-amino-acid chain: uncharacterized protein (411 aa).

2 disordered regions span residues 1–91 and 253–280; these read METP…QDEE and KGPL…AYSP. The span at 46-57 shows a compositional bias: acidic residues; the sequence is ETTESADSENDM. Residues 74-86 are compositionally biased toward low complexity; sequence SNESFSSNQSTES. Over residues 258-272 the composition is skewed to basic and acidic residues; sequence RRNEEDENKPQEKRP. Ser279 is subject to Phosphoserine.

As to expression, widely expressed, highest levels in cerebellum, brain cortex, hippocampus, pons, putamen and amygdala. Highly expressed in neurons, but also present in glial cells. Slightly higher expression in the dorsolateral prefrontal cortex of schizophrenic patients compared to control individuals.

Its subcellular location is the cytoplasm. This is an uncharacterized protein from Homo sapiens (Human).